The sequence spans 109 residues: UPF0122 protein CLL_A1244 (109 aa).

Belongs to the UPF0122 family.

Its function is as follows. Might take part in the signal recognition particle (SRP) pathway. This is inferred from the conservation of its genetic proximity to ftsY/ffh. May be a regulatory protein. This is UPF0122 protein CLL_A1244 from Clostridium botulinum (strain Eklund 17B / Type B).